The following is a 111-amino-acid chain: Putative FAD-linked sulfhydryl oxidase 347L (111 aa).

In terms of domain architecture, ERV/ALR sulfhydryl oxidase spans 2–109 (TDIDPHIWGP…LPESVARKKW (108 aa)). Cys-49 and Cys-52 are joined by a disulfide.

This sequence belongs to the IIV-6 347L family. FAD is required as a cofactor.

It carries out the reaction 2 R'C(R)SH + O2 = R'C(R)S-S(R)CR' + H2O2. Functionally, FAD-dependent sulfhydryl oxidase that catalyzes disulfide bond formation. The chain is Putative FAD-linked sulfhydryl oxidase 347L from Invertebrate iridescent virus 6 (IIV-6).